A 261-amino-acid chain; its full sequence is Cytochrome c oxidase subunit 3 (261 aa).

Over 1–15 the chain is Mitochondrial matrix; it reads MTHQAHAYHMVDPSP. The chain crosses the membrane as a helical span at residues 16-34; it reads WPLTGAVAALLMTSGLAVW. Residues 35–40 lie on the Mitochondrial intermembrane side of the membrane; that stretch reads FHFHST. The chain crosses the membrane as a helical span at residues 41–66; that stretch reads TLMALGTVLLLLTMYQWWRDIIREGT. Residues 67–72 lie on the Mitochondrial matrix side of the membrane; that stretch reads FQGHHT. A helical transmembrane segment spans residues 73-105; it reads PPVQKGLRYGMILFITSEVFFFLGFFWAFYHAS. The Mitochondrial intermembrane portion of the chain corresponds to 106 to 128; the sequence is LAPTPELGGCWPPTGITTLDPFE. Residues 129 to 152 traverse the membrane as a helical segment; that stretch reads VPLLNTAVLLASGVTVTWAHHSIM. At 153–155 the chain is on the mitochondrial matrix side; that stretch reads EGE. The chain crosses the membrane as a helical span at residues 156–183; that stretch reads RKQAIHSLTLTILLGFYFTFLQGLEYYD. At 184–190 the chain is on the mitochondrial intermembrane side; it reads APFTIAD. Residues 191–223 form a helical membrane-spanning segment; the sequence is GVYGSTFFVATGFHGLHVIIGSTFLAVCLLRQI. Over 224–232 the chain is Mitochondrial matrix; that stretch reads RYHFTSEHH. The helical transmembrane segment at 233–256 threads the bilayer; it reads FGFEAAAWYWHFVDVVWLFLYISI. Over 257–261 the chain is Mitochondrial intermembrane; that stretch reads YWWGS.

Belongs to the cytochrome c oxidase subunit 3 family. As to quaternary structure, component of the cytochrome c oxidase (complex IV, CIV), a multisubunit enzyme composed of 14 subunits. The complex is composed of a catalytic core of 3 subunits MT-CO1, MT-CO2 and MT-CO3, encoded in the mitochondrial DNA, and 11 supernumerary subunits COX4I, COX5A, COX5B, COX6A, COX6B, COX6C, COX7A, COX7B, COX7C, COX8 and NDUFA4, which are encoded in the nuclear genome. The complex exists as a monomer or a dimer and forms supercomplexes (SCs) in the inner mitochondrial membrane with NADH-ubiquinone oxidoreductase (complex I, CI) and ubiquinol-cytochrome c oxidoreductase (cytochrome b-c1 complex, complex III, CIII), resulting in different assemblies (supercomplex SCI(1)III(2)IV(1) and megacomplex MCI(2)III(2)IV(2)).

It is found in the mitochondrion inner membrane. The enzyme catalyses 4 Fe(II)-[cytochrome c] + O2 + 8 H(+)(in) = 4 Fe(III)-[cytochrome c] + 2 H2O + 4 H(+)(out). Its function is as follows. Component of the cytochrome c oxidase, the last enzyme in the mitochondrial electron transport chain which drives oxidative phosphorylation. The respiratory chain contains 3 multisubunit complexes succinate dehydrogenase (complex II, CII), ubiquinol-cytochrome c oxidoreductase (cytochrome b-c1 complex, complex III, CIII) and cytochrome c oxidase (complex IV, CIV), that cooperate to transfer electrons derived from NADH and succinate to molecular oxygen, creating an electrochemical gradient over the inner membrane that drives transmembrane transport and the ATP synthase. Cytochrome c oxidase is the component of the respiratory chain that catalyzes the reduction of oxygen to water. Electrons originating from reduced cytochrome c in the intermembrane space (IMS) are transferred via the dinuclear copper A center (CU(A)) of subunit 2 and heme A of subunit 1 to the active site in subunit 1, a binuclear center (BNC) formed by heme A3 and copper B (CU(B)). The BNC reduces molecular oxygen to 2 water molecules using 4 electrons from cytochrome c in the IMS and 4 protons from the mitochondrial matrix. This Gadus morhua (Atlantic cod) protein is Cytochrome c oxidase subunit 3 (mt-co3).